The following is a 383-amino-acid chain: MKNVLPPFIEIYRALIATPSISATEESLDQSNASLITLLAGWFSDLGFNVEVQPVPGTRNKFNMLASTGHGAGGLLLTGHTDTVPFDDGRWTRDPFTLTEHDNKLYGLGTADMKGFFAFILDALRDVDVTKLKKPLYILATADEETSMAGARYFSETTALRPDCAIIGEPTSLQPIRAHKGHISNVVRVLGQSGHSSDPARGVNAIELMHDAIGHIMQLRDSLKARYHYEAFTVPYPTLNLGHIHGGDASNRICACCELHMDIRPLPGMTLNDLNGLLNDALAPVSERWPGRLTVAELHPPIPGYECPPDHQLVEVVEKLLGTKTDVVNYCTEAPFMQTLCPTLVLGPGSINQAHQPDEYLETRFIKPTRELITQVVHHFCWH.

His-80 serves as a coordination point for Zn(2+). Asp-82 is a catalytic residue. Asp-112 is a binding site for Zn(2+). Glu-144 is a catalytic residue. Zn(2+)-binding residues include Glu-145, Glu-169, and His-355.

Belongs to the peptidase M20A family. ArgE subfamily. Homodimer. The cofactor is Zn(2+). It depends on Co(2+) as a cofactor. Requires glutathione as cofactor.

The protein resides in the cytoplasm. The enzyme catalyses N(2)-acetyl-L-ornithine + H2O = L-ornithine + acetate. The protein operates within amino-acid biosynthesis; L-arginine biosynthesis; L-ornithine from N(2)-acetyl-L-ornithine (linear): step 1/1. In terms of biological role, catalyzes the hydrolysis of the amide bond of N(2)-acetylated L-amino acids. Cleaves the acetyl group from N-acetyl-L-ornithine to form L-ornithine, an intermediate in L-arginine biosynthesis pathway, and a branchpoint in the synthesis of polyamines. This chain is Acetylornithine deacetylase, found in Salmonella choleraesuis (strain SC-B67).